The following is a 340-amino-acid chain: Phospho-N-acetylmuramoyl-pentapeptide-transferase (340 aa).

A run of 10 helical transmembrane segments spans residues 3–23, 53–73, 79–99, 119–139, 144–164, 176–196, 200–220, 227–247, 250–270, and 315–335; these read MSLIAGVAAFVLTVLAMPHFI, GGTVFLVVAILISLIFNFHVF, AYGATAGILFVILIYGIIGFL, MALQIVAGLLFYFIHVLPSGT, IGGLTIQLGVFYVLFVLFWIV, IDGLASVSVVISLIAYGIIAF, ELAILTIIITMIGALLGFFVF, VFMGDVGSLSLGAMLAVISIA, VEWTLLLIGVVYVLETASVML, and VDAFLWTIGALASSITLWMVL.

This sequence belongs to the glycosyltransferase 4 family. MraY subfamily. The cofactor is Mg(2+).

The protein localises to the cell membrane. The enzyme catalyses UDP-N-acetyl-alpha-D-muramoyl-L-alanyl-gamma-D-glutamyl-L-lysyl-D-alanyl-D-alanine + di-trans,octa-cis-undecaprenyl phosphate = Mur2Ac(oyl-L-Ala-gamma-D-Glu-L-Lys-D-Ala-D-Ala)-di-trans,octa-cis-undecaprenyl diphosphate + UMP. It functions in the pathway cell wall biogenesis; peptidoglycan biosynthesis. In terms of biological role, catalyzes the initial step of the lipid cycle reactions in the biosynthesis of the cell wall peptidoglycan: transfers peptidoglycan precursor phospho-MurNAc-pentapeptide from UDP-MurNAc-pentapeptide onto the lipid carrier undecaprenyl phosphate, yielding undecaprenyl-pyrophosphoryl-MurNAc-pentapeptide, known as lipid I. The chain is Phospho-N-acetylmuramoyl-pentapeptide-transferase from Streptococcus thermophilus (strain CNRZ 1066).